Here is a 742-residue protein sequence, read N- to C-terminus: Dynein axonemal intermediate chain 4 (742 aa).

WD repeat units follow at residues 462–502, 511–559, 631–671, and 674–713; these read HCEC…DFPV, KHTS…DCND, GHKG…PILT, and NTTN…IDPV.

Part of the multisubunit axonemal dynein complex formed at least of two heavy chains and a number of intermediate and light chains. Associated with axonemal dynein subunits such as, DNAH2, DNAI3, and DYNLT1.

Its subcellular location is the cytoplasm. It localises to the cytoskeleton. The protein resides in the flagellum axoneme. The protein localises to the cilium axoneme. It is found in the dynein axonemal particle. Its function is as follows. Plays a critical role in the assembly of axonemal dynein complex, thereby playing a role in ciliary motility. In Xenopus laevis (African clawed frog), this protein is Dynein axonemal intermediate chain 4.